Here is a 188-residue protein sequence, read N- to C-terminus: dCTP deaminase (188 aa).

Residues Lys111–Arg116, Thr135–Glu137, Gln156, Tyr170, and Gln180 each bind dCTP. Glu137 acts as the Proton donor/acceptor in catalysis.

This sequence belongs to the dCTP deaminase family. Homotrimer.

It catalyses the reaction dCTP + H2O + H(+) = dUTP + NH4(+). The protein operates within pyrimidine metabolism; dUMP biosynthesis; dUMP from dCTP (dUTP route): step 1/2. In terms of biological role, catalyzes the deamination of dCTP to dUTP. In Ectopseudomonas mendocina (strain ymp) (Pseudomonas mendocina), this protein is dCTP deaminase.